The primary structure comprises 405 residues: Fragilysin (405 aa).

An N-terminal signal peptide occupies residues 1–25 (MFILNFNKMKNVKLLLMLGTAALLA). His-356 contacts Zn(2+). Glu-357 is a catalytic residue. Zn(2+) contacts are provided by His-360 and His-366.

Belongs to the peptidase M10C family. Zn(2+) serves as cofactor.

Its subcellular location is the secreted. The catalysed reaction is Broad proteolytic specificity, bonds hydrolyzed includes -Gly-|-Leu-, -Met-|-Leu-, -Phe-|-Leu-, -Cys-|-Leu-, -Leu-|-Gly-.. Diarrheal toxin that hydrolyzes gelatin, azocoll, actin, tropomyosin, and fibrinogen. The polypeptide is Fragilysin (btfP) (Bacteroides fragilis).